The primary structure comprises 98 residues: Protein S100-A13 (98 aa).

The region spanning 18–53 (STFFTFAGREGRKGSLNINEFKELATQQLPHLLKDV) is the EF-hand domain. Residues serine 32, glutamate 37, aspartate 64, asparagine 66, aspartate 68, glutamate 70, and glutamate 75 each coordinate Ca(2+). Residue serine 32 is modified to Phosphoserine.

It belongs to the S-100 family. As to quaternary structure, homodimer. Part of a copper-dependent multiprotein complex containing S100A13, FGF1 and SYT1. Interacts with FGF1 and SYT1. Interacts with IL1A.

The protein resides in the cytoplasm. The protein localises to the secreted. In terms of biological role, plays a role in the export of proteins that lack a signal peptide and are secreted by an alternative pathway. Binds two calcium ions per subunit. Binds one copper ion. Binding of one copper ion does not interfere with calcium binding. Required for the copper-dependent stress-induced export of IL1A and FGF1. The calcium-free protein binds to lipid vesicles containing phosphatidylserine, but not to vesicles containing phosphatidylcholine. This chain is Protein S100-A13 (S100a13), found in Mus musculus (Mouse).